Reading from the N-terminus, the 590-residue chain is Keratin, type II cytoskeletal 5 (590 aa).

Positions 1-18 (MSRQSSVSFRSGGSRSFS) are enriched in low complexity. Positions 1-20 (MSRQSSVSFRSGGSRSFSTA) are disordered. The tract at residues 1-167 (MSRQSSVSFR…DPSIQRVRTE (167 aa)) is head. Phosphoserine occurs at positions 5, 8, 16, and 21. T24 bears the Phosphothreonine; by CDK1 mark. S26, S36, S50, S64, S71, S75, and S82 each carry phosphoserine. T151 is subject to Phosphothreonine; by CDK1. Residues 168-203 (EREQIKTLNNKFASFIDKVRFLEQQNKVLDTKWTLL) form a coil 1A region. Positions 168 to 481 (EREQIKTLNN…KLLEGEECRL (314 aa)) constitute an IF rod domain. Residues 204–222 (QEQGTKTVRQNLEPLFEQY) form a linker 1 region. The coil 1B stretch occupies residues 223-315 (INNLRRQLDS…FFDAELSQMQ (93 aa)). The interval 316–338 (THVSDTSVVLSMDNNRNLDLDSI) is linker 12. Positions 339 to 477 (IAEVKAQYEE…ATYRKLLEGE (139 aa)) are coil 2. A tail region spans residues 478–590 (ECRLSGEGVG…TSSSRKSFKS (113 aa)). Positions 566 to 590 (GSGGGSSSSVKFVSTTSSSRKSFKS) are disordered. Low complexity predominate over residues 572-590 (SSSVKFVSTTSSSRKSFKS).

This sequence belongs to the intermediate filament family. As to quaternary structure, heterodimer of a type I and a type II keratin. Heterodimer with type I keratin KRT25 leading to the formation of keratin intermediate filament (KIF) network. Forms a heterodimer (via 2B domains) with KRT14 (via 2B domains). Interacts with PLEC isoform 1C, when in a heterodimer with KRT14. Interacts with TCHP. Interacts with EPPK1. Interacts with AMELX. Interacts with PKP1 (via N-terminus) and PKP2. Post-translationally, phosphorylated by CDK1, AURKB and Rho-kinase, phosphorylation is regulated by the cell cycle. Thr-24 phosphorylation, mediated by CDK1, peaks during prometaphase or metaphase cells with phosphorylated filamentous structures evident throughout the cytoplasm during early mitosis. CDK1 phosphorylates Thr-24 in mitotic cells at the site of injury. O-glycosylated. In terms of tissue distribution, expressed in corneal epithelium (at protein level). Expressed in keratinocytes (at protein level).

Its subcellular location is the cytoplasm. Functionally, required for the formation of keratin intermediate filaments in the basal epidermis and maintenance of the skin barrier in response to mechanical stress. Regulates the recruitment of Langerhans cells to the epidermis, potentially by modulation of the abundance of macrophage chemotactic cytokines, macrophage inflammatory cytokines and CTNND1 localization in keratinocytes. The chain is Keratin, type II cytoskeletal 5 (KRT5) from Homo sapiens (Human).